The chain runs to 383 residues: Histidine decarboxylase (383 aa).

Histidine 120 serves as a coordination point for substrate. Lysine 233 carries the N6-(pyridoxal phosphate)lysine modification.

It belongs to the group II decarboxylase family. Homotetramer. It depends on pyridoxal 5'-phosphate as a cofactor.

The enzyme catalyses L-histidine + H(+) = histamine + CO2. In Acinetobacter baumannii (strain ATCC 17978 / DSM 105126 / CIP 53.77 / LMG 1025 / NCDC KC755 / 5377), this protein is Histidine decarboxylase.